The sequence spans 144 residues: AP-4 complex subunit sigma-1 (144 aa).

This sequence belongs to the adaptor complexes small subunit family. Adaptor protein complex 4 (AP-4) is a heterotetramer composed of two large adaptins (epsilon-type subunit AP4E1 and beta-type subunit AP4B1), a medium adaptin (mu-type subunit AP4M1) and a small adaptin (sigma-type AP4S1). As to expression, widely expressed.

The protein localises to the golgi apparatus. The protein resides in the trans-Golgi network membrane. Its function is as follows. Component of the adaptor protein complex 4 (AP-4). Adaptor protein complexes are vesicle coat components involved both in vesicle formation and cargo selection. They control the vesicular transport of proteins in different trafficking pathways. AP-4 forms a non clathrin-associated coat on vesicles departing the trans-Golgi network (TGN) and may be involved in the targeting of proteins from the trans-Golgi network (TGN) to the endosomal-lysosomal system. It is also involved in protein sorting to the basolateral membrane in epithelial cells and the proper asymmetric localization of somatodendritic proteins in neurons. AP-4 is involved in the recognition and binding of tyrosine-based sorting signals found in the cytoplasmic part of cargos, but may also recognize other types of sorting signal. The chain is AP-4 complex subunit sigma-1 from Homo sapiens (Human).